The sequence spans 268 residues: MATYIVGDIQGCFDELQQLLEQVNFSASHDQLWLAGDLVARGPKSLETLRFVKSLGDSAKVVLGNHDLHLMAVSQGLKKVKDKDKTAPIFSAPDKKELLTWLSQQPLLAEHDDFVMCHAGISPLWDLDTARNCAREVEAIIRSKQLPWLLENMYSNQPDLWDESLSGLDRYRYTINTFTRMRFCFPDGRLDMDCKLPPQEVSEDELVPWFKLPQRVPLEKAVLFGHWAALQGHIDENIIGLDTGCVWGGSLTMIRWEDKQVFTQQALS.

It belongs to the Ap4A hydrolase family.

The enzyme catalyses P(1),P(4)-bis(5'-adenosyl) tetraphosphate + H2O = 2 ADP + 2 H(+). In terms of biological role, hydrolyzes diadenosine 5',5'''-P1,P4-tetraphosphate to yield ADP. In Vibrio campbellii (strain ATCC BAA-1116), this protein is Bis(5'-nucleosyl)-tetraphosphatase, symmetrical.